The sequence spans 743 residues: Catalase-peroxidase (743 aa).

The disordered stretch occupies residues 1 to 21 (MSENHETVVSELNEESGGGCP). A cross-link (tryptophyl-tyrosyl-methioninium (Trp-Tyr) (with M-257)) is located at residues 108-231 (WHSAGTYRIS…LGAVQMGLIY (124 aa)). The active-site Proton acceptor is the His109. Positions 231–257 (YVNPEGPNGTPDPLAAARDIRETFRRM) form a cross-link, tryptophyl-tyrosyl-methioninium (Tyr-Met) (with W-108). His272 is a heme b binding site. The tract at residues 275–296 (GKTHGAGDPDNVGPEPEGAPLE) is disordered.

It belongs to the peroxidase family. Peroxidase/catalase subfamily. Homodimer or homotetramer. It depends on heme b as a cofactor. Post-translationally, formation of the three residue Trp-Tyr-Met cross-link is important for the catalase, but not the peroxidase activity of the enzyme.

It catalyses the reaction H2O2 + AH2 = A + 2 H2O. The enzyme catalyses 2 H2O2 = O2 + 2 H2O. Bifunctional enzyme with both catalase and broad-spectrum peroxidase activity. The sequence is that of Catalase-peroxidase from Parafrankia sp. (strain EAN1pec).